The chain runs to 648 residues: Transcription termination factor FttA (648 aa).

The not required for dimerization, required for cleavage at some sites stretch occupies residues 1 to 179 (MIKRETQVDQ…QVGRNIYRKP (179 aa)). A KHa region spans residues 9-76 (DQILKDIRGI…ISIRPDPDVL (68 aa)). Residues 77–144 (LPPEEAEKLI…WAPKVVRTPP (68 aa)) are KHb. The tract at residues 185–395 (WIRITGLGGF…LVMESTYGGA (211 aa)) is metallo-beta-lactamase N-terminus. H253, H255, D257, H258, H341, and D364 together coordinate Zn(2+). Residues 396-589 (NDIQMPREEA…MEVHTIDGFS (194 aa)) form a beta-Casp region. Positions 590 to 648 (GHADRRELMNYVAKVRPRPERVITVHGEPQKCLDLATSIHRKFGLSTRAPNNLDTIRLR) are metallo-beta-lactamase C-terminus. Position 615 (H615) interacts with Zn(2+).

Belongs to the metallo-beta-lactamase superfamily. RNA-metabolizing metallo-beta-lactamase-like family. FttA subfamily. As to quaternary structure, homodimer. Interacts with RNA polymerase (RNAP), interacts with the Spt4-Spt5 complex. The cofactor is Zn(2+).

Its activity is regulated as follows. EndoRNase activity is inhibited by 1,10-phenanthroline. Terminates transcription on the whole genome. Termination is linked to FttA-mediated RNA cleavage and does not require NTP hydrolysis. Cleaves endonucleolytically at the RNA exit channel of RNA polymerase (RNAP); the 5'-3' exonuclease activity of this protein degrades the nascent RNA released from RNAP. Its function is as follows. A single-stranded endoribonuclease (endoRNase) with a preference for cleavage at CA dinucleotides. Has 5'-3' exoribonuclease (exoRNase) activity on 5'-monophosphorylated RNA; this activity does not occur on 5'-tri-phosphorylated or 5'-OH substrates. Also has weak activity 5'-3' exodeoxyribonuclease activity on ssDNA. The chain is Transcription termination factor FttA from Pyrococcus abyssi (strain GE5 / Orsay).